The primary structure comprises 197 residues: Alkyl hydroperoxide reductase C (197 aa).

The 162-residue stretch at 2 to 163 (VLVTQNAPNF…MIRMVDALDF (162 aa)) folds into the Thioredoxin domain. Cys50 serves as the catalytic Cysteine sulfenic acid (-SOH) intermediate.

The protein belongs to the peroxiredoxin family. AhpC/Prx1 subfamily. As to quaternary structure, homodimer; disulfide-linked, upon oxidation. 5 homodimers assemble to form a ring-like decamer.

It localises to the cytoplasm. The enzyme catalyses a hydroperoxide + NADH + H(+) = an alcohol + NAD(+) + H2O. Functionally, thiol-specific peroxidase that catalyzes the reduction of hydrogen peroxide and organic hydroperoxides to water and alcohols, respectively. Plays a role in cell protection against oxidative stress by detoxifying peroxides. This is Alkyl hydroperoxide reductase C from Buchnera aphidicola subsp. Acyrthosiphon pisum (strain APS) (Acyrthosiphon pisum symbiotic bacterium).